The following is a 52-amino-acid chain: Large ribosomal subunit protein bL32c (52 aa).

This sequence belongs to the bacterial ribosomal protein bL32 family.

The protein resides in the plastid. Its subcellular location is the chloroplast. This chain is Large ribosomal subunit protein bL32c, found in Nymphaea alba (White water-lily).